The following is a 367-amino-acid chain: Germination protease (367 aa).

Positions 1–15 are excised as a propeptide; sequence MKEPLDLSKYSVRTD.

Belongs to the peptidase A25 family. As to quaternary structure, homotetramer. In terms of processing, autoproteolytically processed. The inactive tetrameric zymogen termed p46 autoprocesses to a smaller form termed p41, which is active only during spore germination.

The enzyme catalyses Endopeptidase action with P4 Glu or Asp, P1 preferably Glu &gt; Asp, P1' hydrophobic and P2' Ala.. Its function is as follows. Initiates the rapid degradation of small, acid-soluble proteins during spore germination. The protein is Germination protease of Bacillus mycoides (strain KBAB4) (Bacillus weihenstephanensis).